The chain runs to 611 residues: Dihydroxy-acid dehydratase (611 aa).

Asp81 serves as a coordination point for Mg(2+). Residue Cys122 participates in [2Fe-2S] cluster binding. 2 residues coordinate Mg(2+): Asp123 and Lys124. Lys124 is subject to N6-carboxylysine. Residue Cys195 coordinates [2Fe-2S] cluster. A Mg(2+)-binding site is contributed by Glu491. Residue Ser517 is the Proton acceptor of the active site.

It belongs to the IlvD/Edd family. In terms of assembly, homodimer. [2Fe-2S] cluster is required as a cofactor. Mg(2+) serves as cofactor.

The catalysed reaction is (2R)-2,3-dihydroxy-3-methylbutanoate = 3-methyl-2-oxobutanoate + H2O. It carries out the reaction (2R,3R)-2,3-dihydroxy-3-methylpentanoate = (S)-3-methyl-2-oxopentanoate + H2O. It functions in the pathway amino-acid biosynthesis; L-isoleucine biosynthesis; L-isoleucine from 2-oxobutanoate: step 3/4. Its pathway is amino-acid biosynthesis; L-valine biosynthesis; L-valine from pyruvate: step 3/4. Functions in the biosynthesis of branched-chain amino acids. Catalyzes the dehydration of (2R,3R)-2,3-dihydroxy-3-methylpentanoate (2,3-dihydroxy-3-methylvalerate) into 2-oxo-3-methylpentanoate (2-oxo-3-methylvalerate) and of (2R)-2,3-dihydroxy-3-methylbutanoate (2,3-dihydroxyisovalerate) into 2-oxo-3-methylbutanoate (2-oxoisovalerate), the penultimate precursor to L-isoleucine and L-valine, respectively. This chain is Dihydroxy-acid dehydratase, found in Brucella suis (strain ATCC 23445 / NCTC 10510).